The chain runs to 121 residues: Large ribosomal subunit protein eL18 (121 aa).

Belongs to the eukaryotic ribosomal protein eL18 family.

The polypeptide is Large ribosomal subunit protein eL18 (Methanospirillum hungatei JF-1 (strain ATCC 27890 / DSM 864 / NBRC 100397 / JF-1)).